A 750-amino-acid chain; its full sequence is Photosystem I P700 chlorophyll a apoprotein A1 (750 aa).

A run of 8 helical transmembrane segments spans residues 70–93 (VFSA…FHGA), 156–179 (LYCT…FHYH), 195–219 (LNHH…HVSL), 291–309 (IAHH…GHMY), 346–369 (WHAQ…HHMY), 385–411 (LSLF…IFMV), 433–455 (AIIS…LYIH), and 531–549 (FLVH…LILL). Positions 573 and 582 each coordinate [4Fe-4S] cluster. 2 helical membrane passes run 589 to 610 (HVFL…HFSW) and 664 to 686 (LSAY…MFLF). A chlorophyll a'-binding site is contributed by histidine 675. 2 residues coordinate chlorophyll a: methionine 683 and tyrosine 691. Tryptophan 692 is a phylloquinone binding site. A helical membrane pass occupies residues 724 to 744 (AVGVTHYLLGGIATTWAFFLA).

The protein belongs to the PsaA/PsaB family. In terms of assembly, the PsaA/B heterodimer binds the P700 chlorophyll special pair and subsequent electron acceptors. PSI consists of a core antenna complex that captures photons, and an electron transfer chain that converts photonic excitation into a charge separation. The eukaryotic PSI reaction center is composed of at least 11 subunits. P700 is a chlorophyll a/chlorophyll a' dimer, A0 is one or more chlorophyll a, A1 is one or both phylloquinones and FX is a shared 4Fe-4S iron-sulfur center. is required as a cofactor.

The protein localises to the plastid. Its subcellular location is the chloroplast thylakoid membrane. The catalysed reaction is reduced [plastocyanin] + hnu + oxidized [2Fe-2S]-[ferredoxin] = oxidized [plastocyanin] + reduced [2Fe-2S]-[ferredoxin]. In terms of biological role, psaA and PsaB bind P700, the primary electron donor of photosystem I (PSI), as well as the electron acceptors A0, A1 and FX. PSI is a plastocyanin-ferredoxin oxidoreductase, converting photonic excitation into a charge separation, which transfers an electron from the donor P700 chlorophyll pair to the spectroscopically characterized acceptors A0, A1, FX, FA and FB in turn. Oxidized P700 is reduced on the lumenal side of the thylakoid membrane by plastocyanin. This chain is Photosystem I P700 chlorophyll a apoprotein A1, found in Amborella trichopoda.